The following is a 673-amino-acid chain: UPF0313 protein blr7973 (673 aa).

The region spanning 332-611 is the Radical SAM core domain; the sequence is AWDMIKFSVT…KAFLRYHDPD (280 aa). [4Fe-4S] cluster contacts are provided by cysteine 346, cysteine 350, and cysteine 353. The tract at residues 632-673 is disordered; the sequence is RPDQLVPAHQPPGTGKAAGTRRPVRPGGKTQRFTTKGLRVMK.

The protein belongs to the UPF0313 family. It depends on [4Fe-4S] cluster as a cofactor.

The polypeptide is UPF0313 protein blr7973 (Bradyrhizobium diazoefficiens (strain JCM 10833 / BCRC 13528 / IAM 13628 / NBRC 14792 / USDA 110)).